The sequence spans 302 residues: Glutamate/aspartate import solute-binding protein (302 aa).

The signal sequence occupies residues 1–22; that stretch reads MQLRKLTTAMLVMGLSAGLAHA.

The protein belongs to the bacterial solute-binding protein 3 family. As to quaternary structure, the complex is composed of two ATP-binding proteins (GltL), two transmembrane proteins (GltJ and GltK) and a solute-binding protein (GltI).

The protein localises to the periplasm. Its function is as follows. Part of the ABC transporter complex GltIJKL involved in glutamate and aspartate uptake. Binds to both glutamate and aspartate. This Salmonella typhimurium (strain LT2 / SGSC1412 / ATCC 700720) protein is Glutamate/aspartate import solute-binding protein (gltI).